The primary structure comprises 90 residues: MNADGPVVNVHVLFFAKSRELANTPRSTVDVPTEITATELLDHLVSKFGLTSIRDNLILAHNESYIDNLSDRILFKEGDELAVIPPLSGG.

At Gly90 the chain carries 1-thioglycine; alternate. Glycyl adenylate; alternate is present on Gly90.

It belongs to the MoaD family. MOCS2A subfamily. In terms of assembly, heterotetramer; composed of 2 small (Mocs2A) and 2 large (Mocs2B) subunits. Post-translationally, C-terminal thiocarboxylation occurs in 2 steps, it is first acyl-adenylated (-COAMP) via the hesA/moeB/thiF part of MOCS3, then thiocarboxylated (-COSH) via the rhodanese domain of MOCS3.

The protein resides in the cytoplasm. It participates in cofactor biosynthesis; molybdopterin biosynthesis. Acts as a sulfur carrier required for molybdopterin biosynthesis. Component of the molybdopterin synthase complex that catalyzes the conversion of precursor Z into molybdopterin by mediating the incorporation of 2 sulfur atoms into precursor Z to generate a dithiolene group. In the complex, serves as sulfur donor by being thiocarboxylated (-COSH) at its C-terminus by MOCS3. After interaction with Mocs2B, the sulfur is then transferred to precursor Z to form molybdopterin. The sequence is that of Molybdopterin synthase sulfur carrier subunit from Drosophila simulans (Fruit fly).